The following is a 156-amino-acid chain: Ribonuclease pancreatic (156 aa).

The N-terminal stretch at 1–28 is a signal peptide; sequence MALEKSLALLPLLVLVLLVLGWVQPSLG. Residues K35 and R38 each contribute to the substrate site. The Proton acceptor role is filled by H40. 4 disulfide bridges follow: C54–C112, C68–C123, C86–C138, and C93–C100. N-linked (GlcNAc...) asparagine glycosylation occurs at N62. Residue 69-73 participates in substrate binding; sequence KPVNT. N-linked (GlcNAc...) asparagine glycosylation occurs at N90. Substrate contacts are provided by K94 and R113. H147 functions as the Proton donor in the catalytic mechanism.

This sequence belongs to the pancreatic ribonuclease family. As to quaternary structure, monomer. Interacts with and forms tight 1:1 complexes with RNH1. Dimerization of two such complexes may occur. Interaction with RNH1 inhibits this protein.

It is found in the secreted. The enzyme catalyses an [RNA] containing cytidine + H2O = an [RNA]-3'-cytidine-3'-phosphate + a 5'-hydroxy-ribonucleotide-3'-[RNA].. It catalyses the reaction an [RNA] containing uridine + H2O = an [RNA]-3'-uridine-3'-phosphate + a 5'-hydroxy-ribonucleotide-3'-[RNA].. Its function is as follows. Endonuclease that catalyzes the cleavage of RNA on the 3' side of pyrimidine nucleotides. Acts on single-stranded and double-stranded RNA. The protein is Ribonuclease pancreatic (RNASE1) of Lagothrix lagotricha (Brown woolly monkey).